A 189-amino-acid chain; its full sequence is 6,7-dimethyl-8-ribityllumazine synthase (189 aa).

5-amino-6-(D-ribitylamino)uracil-binding positions include Trp31, Ser65 to Glu67, and Cys89 to Ile91. Glu94 to Thr95 contacts (2S)-2-hydroxy-3-oxobutyl phosphate. Residue His97 is the Proton donor of the active site. 5-amino-6-(D-ribitylamino)uracil is bound at residue Phe122. Position 136 (Arg136) interacts with (2S)-2-hydroxy-3-oxobutyl phosphate.

Belongs to the DMRL synthase family.

The enzyme catalyses (2S)-2-hydroxy-3-oxobutyl phosphate + 5-amino-6-(D-ribitylamino)uracil = 6,7-dimethyl-8-(1-D-ribityl)lumazine + phosphate + 2 H2O + H(+). It functions in the pathway cofactor biosynthesis; riboflavin biosynthesis; riboflavin from 2-hydroxy-3-oxobutyl phosphate and 5-amino-6-(D-ribitylamino)uracil: step 1/2. Its function is as follows. Catalyzes the formation of 6,7-dimethyl-8-ribityllumazine by condensation of 5-amino-6-(D-ribitylamino)uracil with 3,4-dihydroxy-2-butanone 4-phosphate. This is the penultimate step in the biosynthesis of riboflavin. The chain is 6,7-dimethyl-8-ribityllumazine synthase from Flavobacterium psychrophilum (strain ATCC 49511 / DSM 21280 / CIP 103535 / JIP02/86).